The primary structure comprises 465 residues: UDP-N-acetylmuramoylalanine--D-glutamate ligase (465 aa).

127-133 serves as a coordination point for ATP; the sequence is GSNGKST.

The protein belongs to the MurCDEF family.

It is found in the cytoplasm. The catalysed reaction is UDP-N-acetyl-alpha-D-muramoyl-L-alanine + D-glutamate + ATP = UDP-N-acetyl-alpha-D-muramoyl-L-alanyl-D-glutamate + ADP + phosphate + H(+). The protein operates within cell wall biogenesis; peptidoglycan biosynthesis. In terms of biological role, cell wall formation. Catalyzes the addition of glutamate to the nucleotide precursor UDP-N-acetylmuramoyl-L-alanine (UMA). This chain is UDP-N-acetylmuramoylalanine--D-glutamate ligase, found in Cereibacter sphaeroides (strain ATCC 17023 / DSM 158 / JCM 6121 / CCUG 31486 / LMG 2827 / NBRC 12203 / NCIMB 8253 / ATH 2.4.1.) (Rhodobacter sphaeroides).